A 257-amino-acid polypeptide reads, in one-letter code: MLILVSPAKTLDFEQPPLTQVYSQPDFLTHSQELIQVCRQLTPSDISTLMKVSDKIAGLNAARFGQWQPGFSLDNAKQAIFAFRGDVYTGFDADSLSEDEIAQTQSQLRILSGLYGLLRPLDLIMPYRLEMGTALSNPKGKNLYEFWGDTLTQAVNEALAESGSDIIVNLASNEYFKAIKPKKLQGQLISPVFKDCKNGQYKVISFFAKRARGMMARYIITNKVNTLAELKAFNLAGYYYSEEQSSPTNPTFLREEQ.

It belongs to the UPF0246 family.

The polypeptide is UPF0246 protein Shew185_1115 (Shewanella baltica (strain OS185)).